A 287-amino-acid chain; its full sequence is HTH-type transcriptional regulator MurR (287 aa).

The HTH rpiR-type domain occupies 1–77 (MLYLAKMRNA…MALIEEYSVN (77 aa)). Residues 37–56 (SRNLAKQLEVSQSSIVKFAQ) constitute a DNA-binding region (H-T-H motif). Positions 128–268 (VINLISKARL…FVGMVQLNDV (141 aa)) constitute an SIS domain.

In terms of assembly, homotetramer.

The protein operates within amino-sugar metabolism; N-acetylmuramate degradation [regulation]. Represses the expression of the murPQ operon involved in the uptake and degradation of N-acetylmuramic acid (MurNAc). Binds to two adjacent inverted repeats within the operator region. MurNAc 6-phosphate, the substrate of MurQ, is the specific inducer that weakens binding of MurR to the operator. The sequence is that of HTH-type transcriptional regulator MurR from Citrobacter koseri (strain ATCC BAA-895 / CDC 4225-83 / SGSC4696).